The primary structure comprises 864 residues: DNA mismatch repair protein MutS (864 aa).

607–614 (GPNMGGKS) provides a ligand contact to ATP.

Belongs to the DNA mismatch repair MutS family.

In terms of biological role, this protein is involved in the repair of mismatches in DNA. It is possible that it carries out the mismatch recognition step. This protein has a weak ATPase activity. The chain is DNA mismatch repair protein MutS from Neisseria meningitidis serogroup C / serotype 2a (strain ATCC 700532 / DSM 15464 / FAM18).